The primary structure comprises 127 residues: uncharacterized protein (127 aa).

2 disordered regions span residues 1-22 and 53-106; these read MLPA…KMKG and LVGK…PGPK. A compositionally biased stretch (basic and acidic residues) spans 76-95; the sequence is PNGEAHAEQARRKISVEEKQ.

The protein localises to the mitochondrion. This is an uncharacterized protein from Arabidopsis thaliana (Mouse-ear cress).